We begin with the raw amino-acid sequence, 590 residues long: Urease subunit alpha (590 aa).

The 457-residue stretch at 134–590 (GGIDSHIHFI…LPLAQRYFLF (457 aa)) folds into the Urease domain. Residues H139, H141, and K222 each contribute to the Ni(2+) site. K222 bears the N6-carboxylysine mark. A substrate-binding site is contributed by H224. Ni(2+)-binding residues include H251 and H277. Catalysis depends on H325, which acts as the Proton donor. Position 365 (D365) interacts with Ni(2+). The disordered stretch occupies residues 388–416 (QQRGWLSPPAAGQGAGLSSAAGQGVDHDT). Low complexity predominate over residues 393-411 (LSPPAAGQGAGLSSAAGQG).

This sequence belongs to the metallo-dependent hydrolases superfamily. Urease alpha subunit family. In terms of assembly, heterotrimer of UreA (gamma), UreB (beta) and UreC (alpha) subunits. Three heterotrimers associate to form the active enzyme. The cofactor is Ni cation. Carboxylation allows a single lysine to coordinate two nickel ions.

The protein resides in the cytoplasm. It carries out the reaction urea + 2 H2O + H(+) = hydrogencarbonate + 2 NH4(+). It functions in the pathway nitrogen metabolism; urea degradation; CO(2) and NH(3) from urea (urease route): step 1/1. In Verminephrobacter eiseniae (strain EF01-2), this protein is Urease subunit alpha.